The chain runs to 418 residues: MSGLKQELGLAQGIGLLSTSLLGTGVFAVPALAALVAGNNSLWAWPVLIILVFPIAIVFAILGRHYPSAGGVAHFVGMAFGSRLERVTGWLFLSVIPVGLPAALQIAAGFGQAMFGWHSWQLLLAELGTLALVWYIGTRGASSSANLQTVIAGLIVALIVAIWWAGDIKPANIPFPAPGNIELTGLFAALSVMFWCFVGLEAFAHLASEFKNPERDFPRALMIGLLLAGLVYWGCTVVVLHFDAYGEKMAAAASLPKIVVQLFGVGALWIACVIGYLACFASLNIYIQSFARLVWSQAQHNPDHYLARLSSRHIPNNALNAVLGCCVVSTLVIHALEINLDALIIYANGIFIMIYLLCMLAGCKLLQGRYRLLAVVGGLLCVLLLAMVGWKSLYALIMLAGLWLLLPKRKTPENGITT.

Residues 1-15 (MSGLKQELGLAQGIG) are Periplasmic-facing. The chain crosses the membrane as a helical span at residues 16-36 (LLSTSLLGTGVFAVPALAALV). Over 37-41 (AGNNS) the chain is Cytoplasmic. A helical membrane pass occupies residues 42-62 (LWAWPVLIILVFPIAIVFAIL). Residues 63-89 (GRHYPSAGGVAHFVGMAFGSRLERVTG) lie on the Periplasmic side of the membrane. Residues 90–110 (WLFLSVIPVGLPAALQIAAGF) form a helical membrane-spanning segment. The Cytoplasmic portion of the chain corresponds to 111–113 (GQA). Residues 114 to 134 (MFGWHSWQLLLAELGTLALVW) form a helical membrane-spanning segment. The Periplasmic segment spans residues 135–147 (YIGTRGASSSANL). Residues 148-168 (QTVIAGLIVALIVAIWWAGDI) traverse the membrane as a helical segment. At 169-182 (KPANIPFPAPGNIE) the chain is on the cytoplasmic side. Residues 183–203 (LTGLFAALSVMFWCFVGLEAF) form a helical membrane-spanning segment. At 204-219 (AHLASEFKNPERDFPR) the chain is on the periplasmic side. A helical transmembrane segment spans residues 220-240 (ALMIGLLLAGLVYWGCTVVVL). At 241–257 (HFDAYGEKMAAAASLPK) the chain is on the cytoplasmic side. Residues 258 to 278 (IVVQLFGVGALWIACVIGYLA) form a helical membrane-spanning segment. Topologically, residues 279-317 (CFASLNIYIQSFARLVWSQAQHNPDHYLARLSSRHIPNN) are periplasmic. The chain crosses the membrane as a helical span at residues 318–338 (ALNAVLGCCVVSTLVIHALEI). Residues 339 to 341 (NLD) are Cytoplasmic-facing. A helical membrane pass occupies residues 342–362 (ALIIYANGIFIMIYLLCMLAG). Residues 363–378 (CKLLQGRYRLLAVVGG) lie on the Periplasmic side of the membrane. The helical transmembrane segment at 379–399 (LLCVLLLAMVGWKSLYALIML) threads the bilayer. At 400–418 (AGLWLLLPKRKTPENGITT) the chain is on the cytoplasmic side.

This sequence belongs to the amino acid-polyamine-organocation (APC) superfamily. Amino acid efflux (AAE) (TC 2.A.3.13) family.

The protein resides in the cell inner membrane. It carries out the reaction L-methionine(in) + H(+)(out) = L-methionine(out) + H(+)(in). The enzyme catalyses L-leucine(in) + H(+)(out) = L-leucine(out) + H(+)(in). It catalyses the reaction L-isoleucine(in) + H(+)(out) = L-isoleucine(out) + H(+)(in). The catalysed reaction is L-valine(in) + H(+)(out) = L-valine(out) + H(+)(in). Efflux of L-methionine is inhibited by the proton ionophore carbonyl cyanide m-chlorophenylhydrazone (CCCP). Its function is as follows. Catalyzes the efflux of L-methionine, L-leucine, L-isoleucine and L-valine. Activity is dependent on electrochemical potential. The chain is L-methionine/branched-chain amino acid exporter YjeH (yjeH) from Escherichia coli (strain K12).